Consider the following 76-residue polypeptide: Immune protein Tsi5 (76 aa).

2 helical membrane-spanning segments follow: residues Leu19–Phe39 and Trp43–Tyr63.

The protein resides in the membrane. Immunity protein that plays a role in preventing early activation of toxin Tse5. This is Immune protein Tsi5 from Pseudomonas aeruginosa (strain ATCC 15692 / DSM 22644 / CIP 104116 / JCM 14847 / LMG 12228 / 1C / PRS 101 / PAO1).